The primary structure comprises 209 residues: Uracil phosphoribosyltransferase (209 aa).

5-phospho-alpha-D-ribose 1-diphosphate-binding positions include Arg-77, Arg-102, and 129 to 137 (DPMLATGVS). Residues Ile-192 and 197–199 (GDA) contribute to the uracil site. Asp-198 provides a ligand contact to 5-phospho-alpha-D-ribose 1-diphosphate.

The protein belongs to the UPRTase family. The cofactor is Mg(2+).

It carries out the reaction UMP + diphosphate = 5-phospho-alpha-D-ribose 1-diphosphate + uracil. It participates in pyrimidine metabolism; UMP biosynthesis via salvage pathway; UMP from uracil: step 1/1. With respect to regulation, allosterically activated by GTP. In terms of biological role, catalyzes the conversion of uracil and 5-phospho-alpha-D-ribose 1-diphosphate (PRPP) to UMP and diphosphate. This chain is Uracil phosphoribosyltransferase, found in Metamycoplasma arthritidis (strain 158L3-1) (Mycoplasma arthritidis).